Reading from the N-terminus, the 241-residue chain is RAD9, HUS1, RAD1-interacting nuclear orphan protein 1 (241 aa).

Residues 1–10 are compositionally biased toward basic residues; that stretch reads MPPRKKRRQA. Residues 1–27 are disordered; that stretch reads MPPRKKRRQAAQKPQLLFHQQPLEAPK. Residues 56–62 carry the RAD1-binding motif motif; sequence SWVSPQF. 2 disordered regions span residues 68-134 and 157-204; these read SWFP…PLVP and IPPD…LVTD. Residues 72–87 show a composition bias toward basic residues; sequence GKRKHHHRDHARRSSR. Residues 100-110 are compositionally biased toward polar residues; sequence ETPQSSASSAT. Positions 129 to 136 match the D-box motif; the sequence is GRPLVPML. The KEN box signature appears at 177-181; the sequence is LRENS. The segment covering 181-193 has biased composition (polar residues); it reads SLPSCSLHTSTPK.

In terms of assembly, interacts (when phosphorylated by PLK1) with POLQ; promoting POLQ recruitment to DNA damage sites. Interacts with RAD1; interaction is direct and promotes association with the 9-1-1 (RAD9-RAD1-HUS1) complex. Interacts with RAD18. Interacts with TOPBP1. Interacts with UBE2N. In terms of processing, phosphorylated by PLK1, promoting interaction with polymerase theta (POLQ). Ubiquitinated and degraded by the APC/C complex upon mitotic exit.

It localises to the nucleus. The protein localises to the chromosome. Functionally, involved in microhomology-mediated end-joining (MMEJ) DNA repair by promoting recruitment of polymerase theta (POLQ) to DNA damage sites during mitosis. MMEJ is an alternative non-homologous end-joining (NHEJ) machinery that takes place during mitosis to repair double-strand breaks in DNA that originate in S-phase. Accumulates in M-phase; following phosphorylation by PLK1, interacts with POLQ, enabling its recruitment to double-strand breaks for subsequent repair. Also involved in the DNA damage response (DDR) signaling in response to genotoxic stresses such as ionizing radiation (IR) during the S phase. Recruited to sites of DNA damage through interaction with the 9-1-1 cell-cycle checkpoint response complex and TOPBP1 in a ATR-dependent manner. Required for the progression of the G1 to S phase transition. Plays a role in the stimulation of CHEK1 phosphorylation. This Bos taurus (Bovine) protein is RAD9, HUS1, RAD1-interacting nuclear orphan protein 1 (RHNO1).